Here is a 332-residue protein sequence, read N- to C-terminus: Glyceraldehyde-3-phosphate dehydrogenase (332 aa).

Residues 10–11 (RI), D32, and M77 each bind NAD(+). D-glyceraldehyde 3-phosphate contacts are provided by residues 148–150 (SCT), T179, 208–209 (TG), and R231. The active-site Nucleophile is C149. Residue N313 participates in NAD(+) binding.

Belongs to the glyceraldehyde-3-phosphate dehydrogenase family. Homotetramer.

The protein resides in the cytoplasm. The catalysed reaction is D-glyceraldehyde 3-phosphate + phosphate + NAD(+) = (2R)-3-phospho-glyceroyl phosphate + NADH + H(+). It participates in carbohydrate degradation; glycolysis; pyruvate from D-glyceraldehyde 3-phosphate: step 1/5. The polypeptide is Glyceraldehyde-3-phosphate dehydrogenase (GPDA) (Phytophthora infestans (Potato late blight agent)).